Consider the following 137-residue polypeptide: Actin-depolymerizing factor 12 (137 aa).

Ser6 bears the Phosphoserine mark. The region spanning 7-137 (GMAVEDECKL…SLDIIKSRAL (131 aa)) is the ADF-H domain.

It belongs to the actin-binding proteins ADF family. As to expression, specifically expressed in pollen.

It localises to the cytoplasm. The protein localises to the cytoskeleton. Its function is as follows. Actin-depolymerizing protein. Severs actin filaments (F-actin) and binds to actin monomers. The sequence is that of Actin-depolymerizing factor 12 from Arabidopsis thaliana (Mouse-ear cress).